A 344-amino-acid chain; its full sequence is Phosphate acyltransferase (344 aa).

This sequence belongs to the PlsX family. Homodimer. Probably interacts with PlsY.

The protein resides in the cytoplasm. It carries out the reaction a fatty acyl-[ACP] + phosphate = an acyl phosphate + holo-[ACP]. It functions in the pathway lipid metabolism; phospholipid metabolism. Its function is as follows. Catalyzes the reversible formation of acyl-phosphate (acyl-PO(4)) from acyl-[acyl-carrier-protein] (acyl-ACP). This enzyme utilizes acyl-ACP as fatty acyl donor, but not acyl-CoA. This chain is Phosphate acyltransferase, found in Cronobacter sakazakii (strain ATCC BAA-894) (Enterobacter sakazakii).